Consider the following 114-residue polypeptide: Acetyltransferase At1g77540 (114 aa).

T2 is modified (N-acetylthreonine). Residues 18–106 (KIVWNEGKRR…RNPSWKPLIH (89 aa)) enclose the N-acetyltransferase domain. CoA is bound by residues 52 to 55 (HTYV) and 61 to 66 (GLGLAS). The active-site Nucleophile is C87. Residues 88–89 (SY), T93, and R97 contribute to the CoA site.

Its subcellular location is the peroxisome. Its function is as follows. Possesses in vitro histone acetyltransferase activity with histones H3 and H4. In Arabidopsis thaliana (Mouse-ear cress), this protein is Acetyltransferase At1g77540.